The sequence spans 304 residues: Recombination-associated protein RdgC (304 aa).

The protein belongs to the RdgC family.

Its subcellular location is the cytoplasm. The protein localises to the nucleoid. In terms of biological role, may be involved in recombination. This is Recombination-associated protein RdgC from Paraburkholderia phymatum (strain DSM 17167 / CIP 108236 / LMG 21445 / STM815) (Burkholderia phymatum).